Reading from the N-terminus, the 273-residue chain is Dermonecrotic toxin LsaSicTox-alphaIB1aiii (273 aa).

Residue H5 is part of the active site. Residues E25 and D27 each contribute to the Mg(2+) site. The active-site Nucleophile is the H41. 2 disulfides stabilise this stretch: C45–C51 and C47–C190. D85 is a binding site for Mg(2+).

The protein belongs to the arthropod phospholipase D family. Class II subfamily. Requires Mg(2+) as cofactor. As to expression, expressed by the venom gland.

Its subcellular location is the secreted. The catalysed reaction is an N-(acyl)-sphingosylphosphocholine = an N-(acyl)-sphingosyl-1,3-cyclic phosphate + choline. The enzyme catalyses an N-(acyl)-sphingosylphosphoethanolamine = an N-(acyl)-sphingosyl-1,3-cyclic phosphate + ethanolamine. It catalyses the reaction a 1-acyl-sn-glycero-3-phosphocholine = a 1-acyl-sn-glycero-2,3-cyclic phosphate + choline. It carries out the reaction a 1-acyl-sn-glycero-3-phosphoethanolamine = a 1-acyl-sn-glycero-2,3-cyclic phosphate + ethanolamine. In terms of biological role, dermonecrotic toxins cleave the phosphodiester linkage between the phosphate and headgroup of certain phospholipids (sphingolipid and lysolipid substrates), forming an alcohol (often choline) and a cyclic phosphate. This toxin acts on sphingomyelin (SM). It may also act on ceramide phosphoethanolamine (CPE), lysophosphatidylcholine (LPC) and lysophosphatidylethanolamine (LPE), but not on lysophosphatidylserine (LPS), and lysophosphatidylglycerol (LPG). It acts by transphosphatidylation, releasing exclusively cyclic phosphate products as second products. Induces dermonecrosis, hemolysis, increased vascular permeability, edema, inflammatory response, and platelet aggregation. The chain is Dermonecrotic toxin LsaSicTox-alphaIB1aiii from Loxosceles sabina (Tucson recluse spider).